We begin with the raw amino-acid sequence, 100 residues long: Osteocalcin (100 aa).

An N-terminal signal peptide occupies residues Met-1–Ala-23. Residues Lys-24–Arg-51 constitute a propeptide that is removed on maturation. The Gla domain occupies Tyr-52 to Gly-98. Pro-60 carries the post-translational modification 4-hydroxyproline. Ca(2+)-binding residues include Glu-68, Glu-72, Glu-75, and Asp-81. 3 positions are modified to 4-carboxyglutamate: Glu-68, Glu-72, and Glu-75. Cys-74 and Cys-80 are joined by a disulfide.

It belongs to the osteocalcin/matrix Gla protein family. Gamma-carboxyglutamate residues are formed by vitamin K dependent carboxylation by GGCX. These residues are essential for the binding of calcium. Decarboxylation promotes the hormone activity.

The protein localises to the secreted. Functionally, the carboxylated form is one of the main organic components of the bone matrix, which constitutes 1-2% of the total bone protein: it acts as a negative regulator of bone formation and is required to limit bone formation without impairing bone resorption or mineralization. The carboxylated form binds strongly to apatite and calcium. Its function is as follows. The uncarboxylated form acts as a hormone secreted by osteoblasts, which regulates different cellular processes, such as energy metabolism, male fertility and brain development. Regulates of energy metabolism by acting as a hormone favoring pancreatic beta-cell proliferation, insulin secretion and sensitivity and energy expenditure. Uncarboxylated osteocalcin hormone also promotes testosterone production in the testes: acts as a ligand for G protein-coupled receptor GPRC6A at the surface of Leydig cells, initiating a signaling response that promotes the expression of enzymes required for testosterone synthesis in a CREB-dependent manner. Also acts as a regulator of brain development: osteocalcin hormone crosses the blood-brain barrier and acts as a ligand for GPR158 on neurons, initiating a signaling response that prevents neuronal apoptosis in the hippocampus, favors the synthesis of all monoamine neurotransmitters and inhibits that of gamma-aminobutyric acid (GABA). Osteocalcin also crosses the placenta during pregnancy and maternal osteocalcin is required for fetal brain development. The chain is Osteocalcin (BGLAP) from Macaca mulatta (Rhesus macaque).